Consider the following 163-residue polypeptide: Myosin light chain 2 (163 aa).

EF-hand domains lie at D15–T50 and P92–E127. The Ca(2+) site is built by D28, D30, D32, and D39.

Interacts with the IQ domain of MYO1.

The protein resides in the bud neck. In terms of biological role, regulatory light chain for the class II conventional myosin MYO1. May play a role in the disassembly of the MYO1 ring at the bud neck at the end of its contraction during cytokinesis. This chain is Myosin light chain 2 (MLC2), found in Saccharomyces cerevisiae (strain ATCC 204508 / S288c) (Baker's yeast).